The following is a 309-amino-acid chain: Glutaminase (309 aa).

The substrate site is built by S64, N114, E160, N167, Y191, Y243, and V261.

The protein belongs to the glutaminase family. Homotetramer.

The catalysed reaction is L-glutamine + H2O = L-glutamate + NH4(+). The sequence is that of Glutaminase from Rhizobium leguminosarum bv. trifolii (strain WSM2304).